Reading from the N-terminus, the 534-residue chain is Calcium-dependent protein kinase 18 (534 aa).

The segment at 1–49 is disordered; it reads MGLCFSSPKATRRGTGSRNPNPDSPTQGKASEKVSNKNKKNTKKIQLRH. Gly2 is lipidated: N-myristoyl glycine. The segment covering 14-29 has biased composition (polar residues); the sequence is GTGSRNPNPDSPTQGK. Over residues 36–47 the composition is skewed to basic residues; sequence NKNKKNTKKIQL. The 261-residue stretch at 71-331 folds into the Protein kinase domain; sequence YTIGKLLGHG…AAQALSHSWV (261 aa). Residues 77–85 and Lys100 contribute to the ATP site; that span reads LGHGQFGFT. Residue Asp197 is the Proton acceptor of the active site. Ser237 carries the post-translational modification Phosphoserine. The interval 337-367 is autoinhibitory domain; it reads ASEVPIDISVLNNMRQFVKFSRLKQIALRAL. 4 EF-hand domains span residues 374–409, 411–446, 453–488, and 491–518; these read DELDDLRDQFDAIDIDKNGSISLEEMRQALAKDVPW, LKDARVAEILQANDSNTDGLVDFTEFVVAALHVNQL, KWQQRSRAAFDKFDIDGDGFITPEELRLQTGLKGSI, and LLEEADVDEDGRISINEFRRLLRSASLK. Asp387, Asp389, Asn391, Ser393, Glu398, Asp424, Asn426, Asp428, Glu435, Asp466, Asp468, Asp470, Glu477, Asp496, Asp498, Asp500, and Arg502 together coordinate Ca(2+). A Phosphoserine modification is found at Ser504. Residue Glu507 coordinates Ca(2+).

It belongs to the protein kinase superfamily. Ser/Thr protein kinase family. CDPK subfamily.

Its subcellular location is the membrane. The enzyme catalyses L-seryl-[protein] + ATP = O-phospho-L-seryl-[protein] + ADP + H(+). It catalyses the reaction L-threonyl-[protein] + ATP = O-phospho-L-threonyl-[protein] + ADP + H(+). With respect to regulation, activated by calcium. Autophosphorylation may play an important role in the regulation of the kinase activity. May play a role in signal transduction pathways that involve calcium as a second messenger. The chain is Calcium-dependent protein kinase 18 (CPK18) from Arabidopsis thaliana (Mouse-ear cress).